Reading from the N-terminus, the 876-residue chain is Alanine--tRNA ligase (876 aa).

Residues H564, H568, C666, and H670 each coordinate Zn(2+).

This sequence belongs to the class-II aminoacyl-tRNA synthetase family. In terms of assembly, homotetramer. The cofactor is Zn(2+).

The protein localises to the cytoplasm. The enzyme catalyses tRNA(Ala) + L-alanine + ATP = L-alanyl-tRNA(Ala) + AMP + diphosphate. Catalyzes the attachment of alanine to tRNA(Ala) in a two-step reaction: alanine is first activated by ATP to form Ala-AMP and then transferred to the acceptor end of tRNA(Ala). Also edits incorrectly charged Ser-tRNA(Ala) and Gly-tRNA(Ala) via its editing domain. The chain is Alanine--tRNA ligase from Salmonella choleraesuis (strain SC-B67).